Reading from the N-terminus, the 564-residue chain is Juvenile hormone esterase (564 aa).

An N-terminal signal peptide occupies residues 1–19 (MTSHVLALAFLLHACTALA). Asn81 is a glycosylation site (N-linked (GlcNAc...) asparagine). Cysteines 89 and 109 form a disulfide. Asn180 carries N-linked (GlcNAc...) asparagine glycosylation. Residue Ser220 is the Acyl-ester intermediate of the active site. Glu351 functions as the Charge relay system in the catalytic mechanism. Residue Asn402 is glycosylated (N-linked (GlcNAc...) asparagine). The active-site Charge relay system is the His465. N-linked (GlcNAc...) asparagine glycosylation occurs at Asn515.

The protein belongs to the type-B carboxylesterase/lipase family.

It catalyses the reaction juvenile hormone I + H2O = juvenile hormone I carboxylate + methanol + H(+). It carries out the reaction juvenile hormone III + H2O = juvenile hormone III carboxylate + methanol + H(+). Functionally, JH esterase plays a crucial role in the decrease of JH activity in lepidopteran insects, by hydrolyzing the methyl ester of JH. It is also involved in the transport of JH. This Heliothis virescens (Tobacco budworm moth) protein is Juvenile hormone esterase.